A 481-amino-acid polypeptide reads, in one-letter code: 3-isopropylmalate dehydratase large subunit (481 aa).

The [4Fe-4S] cluster site is built by cysteine 357, cysteine 417, and cysteine 420. The segment covering 429–441 (SPGQRCASTSNRN) has biased composition (polar residues). A disordered region spans residues 429-451 (SPGQRCASTSNRNFEGRQGKGGR).

It belongs to the aconitase/IPM isomerase family. LeuC type 1 subfamily. In terms of assembly, heterodimer of LeuC and LeuD. The cofactor is [4Fe-4S] cluster.

The catalysed reaction is (2R,3S)-3-isopropylmalate = (2S)-2-isopropylmalate. Its pathway is amino-acid biosynthesis; L-leucine biosynthesis; L-leucine from 3-methyl-2-oxobutanoate: step 2/4. Functionally, catalyzes the isomerization between 2-isopropylmalate and 3-isopropylmalate, via the formation of 2-isopropylmaleate. The protein is 3-isopropylmalate dehydratase large subunit of Mycobacterium sp. (strain KMS).